Reading from the N-terminus, the 548-residue chain is Glucose-6-phosphate isomerase (548 aa).

The active-site Proton donor is the E354. Active-site residues include H385 and K513.

The protein belongs to the GPI family.

It is found in the cytoplasm. The enzyme catalyses alpha-D-glucose 6-phosphate = beta-D-fructose 6-phosphate. It functions in the pathway carbohydrate biosynthesis; gluconeogenesis. Its pathway is carbohydrate degradation; glycolysis; D-glyceraldehyde 3-phosphate and glycerone phosphate from D-glucose: step 2/4. Its function is as follows. Catalyzes the reversible isomerization of glucose-6-phosphate to fructose-6-phosphate. The polypeptide is Glucose-6-phosphate isomerase (Marinomonas sp. (strain MWYL1)).